The sequence spans 385 residues: 8-amino-7-oxononanoate synthase (385 aa).

Arginine 21 is a substrate binding site. 108 to 109 (GF) contacts pyridoxal 5'-phosphate. Histidine 133 serves as a coordination point for substrate. Positions 179, 207, and 233 each coordinate pyridoxal 5'-phosphate. Lysine 236 carries the post-translational modification N6-(pyridoxal phosphate)lysine. Residue threonine 352 participates in substrate binding.

The protein belongs to the class-II pyridoxal-phosphate-dependent aminotransferase family. BioF subfamily. As to quaternary structure, homodimer. Pyridoxal 5'-phosphate is required as a cofactor.

It carries out the reaction 6-carboxyhexanoyl-[ACP] + L-alanine + H(+) = (8S)-8-amino-7-oxononanoate + holo-[ACP] + CO2. It functions in the pathway cofactor biosynthesis; biotin biosynthesis. In terms of biological role, catalyzes the decarboxylative condensation of pimeloyl-[acyl-carrier protein] and L-alanine to produce 8-amino-7-oxononanoate (AON), [acyl-carrier protein], and carbon dioxide. In Salmonella typhimurium (strain LT2 / SGSC1412 / ATCC 700720), this protein is 8-amino-7-oxononanoate synthase.